The primary structure comprises 336 residues: Ribosomal RNA large subunit methyltransferase F (336 aa).

The protein belongs to the methyltransferase superfamily. METTL16/RlmF family.

The protein localises to the cytoplasm. The catalysed reaction is adenosine(1618) in 23S rRNA + S-adenosyl-L-methionine = N(6)-methyladenosine(1618) in 23S rRNA + S-adenosyl-L-homocysteine + H(+). Its function is as follows. Specifically methylates the adenine in position 1618 of 23S rRNA. The chain is Ribosomal RNA large subunit methyltransferase F from Yersinia pestis bv. Antiqua (strain Nepal516).